A 758-amino-acid polypeptide reads, in one-letter code: Aspartyl/asparaginyl beta-hydroxylase (758 aa).

The tract at residues 1 to 46 (MAQRKNAKSSGNSSSSGSGSGSTSAGSSSPGARRETKHGGHKNGRK) is disordered. Residues 1–53 (MAQRKNAKSSGNSSSSGSGSGSTSAGSSSPGARRETKHGGHKNGRKGGLSGTS) lie on the Cytoplasmic side of the membrane. The segment covering 9 to 31 (SSGNSSSSGSGSGSTSAGSSSPG) has biased composition (low complexity). The residue at position 14 (Ser-14) is a Phosphoserine. The chain crosses the membrane as a helical; Signal-anchor for type II membrane protein span at residues 54 to 74 (FFTWFMVIALLGVWTSVAVVW). Leu-64 carries an N-linked (GlcNAc...) asparagine glycan. At 75 to 758 (FDLVDYEEVL…PQQRRSLPAI (684 aa)) the chain is on the lumenal side. Asp-91, Asp-93, Asp-95, Asp-97, and Asp-102 together coordinate Ca(2+). Disordered regions lie at residues 111–140 (ERST…EAEP) and 304–324 (EEQQ…EQKA). Positions 313-324 (TNRKTDDPEQKA) are enriched in basic and acidic residues. The stretch at 341-374 (IKAELDAAEKLRKRGKIEEAVNAFKELVRKYPQS) is one TPR 1 repeat. Asn-452 carries N-linked (GlcNAc...) asparagine glycosylation. 3 TPR repeats span residues 454–487 (TSLK…TPND), 489–521 (FAKV…GDPG), and 525–557 (GRFY…GHFA). 2-oxoglutarate is bound at residue Trp-625. An intrachain disulfide couples Cys-641 to Cys-648. Position 668 (Ser-668) interacts with 2-oxoglutarate. His-679 contributes to the Fe cation binding site. 2-oxoglutarate is bound at residue 688-690 (RMH). Asn-706 carries N-linked (GlcNAc...) asparagine glycosylation. His-725 serves as a coordination point for Fe cation. Arg-735 contributes to the 2-oxoglutarate binding site.

This sequence belongs to the aspartyl/asparaginyl beta-hydroxylase family. In terms of assembly, monomer. Isoform 8 interacts with ORAI1 and STIM1. Isoform 4 interacts with CASQ2. It depends on Fe cation as a cofactor. In terms of tissue distribution, isoform 1 is detected in all tissues tested. Isoform 8 is mainly expressed in pancreas, heart, brain, kidney and liver. Isoform 8 is expressed in kidney (at protein level).

Its subcellular location is the endoplasmic reticulum membrane. The protein resides in the sarcoplasmic reticulum membrane. The catalysed reaction is L-aspartyl-[protein] + 2-oxoglutarate + O2 = 3-hydroxy-L-aspartyl-[protein] + succinate + CO2. In terms of biological role, specifically hydroxylates an Asp or Asn residue in certain epidermal growth factor-like (EGF) domains of a number of proteins. Its function is as follows. Membrane-bound Ca(2+)-sensing protein, which is a structural component of the ER-plasma membrane junctions. Isoform 8 regulates the activity of Ca(+2) released-activated Ca(+2) (CRAC) channels in T-cells. The chain is Aspartyl/asparaginyl beta-hydroxylase (ASPH) from Homo sapiens (Human).